We begin with the raw amino-acid sequence, 347 residues long: Ribosomal RNA small subunit methyltransferase H (347 aa).

S-adenosyl-L-methionine contacts are provided by residues G47–Y49, D64, F91, D114, and Q121. The interval P291 to S347 is disordered.

It belongs to the methyltransferase superfamily. RsmH family.

The protein localises to the cytoplasm. It carries out the reaction cytidine(1402) in 16S rRNA + S-adenosyl-L-methionine = N(4)-methylcytidine(1402) in 16S rRNA + S-adenosyl-L-homocysteine + H(+). Functionally, specifically methylates the N4 position of cytidine in position 1402 (C1402) of 16S rRNA. The protein is Ribosomal RNA small subunit methyltransferase H of Brucella anthropi (strain ATCC 49188 / DSM 6882 / CCUG 24695 / JCM 21032 / LMG 3331 / NBRC 15819 / NCTC 12168 / Alc 37) (Ochrobactrum anthropi).